Consider the following 67-residue polypeptide: Protein LITTLE ZIPPER 3 (67 aa).

Residues 14-59 (YIMKENERLRKKAELLNQENQQLLFQLKQKLSKTKNSNNGSNNDNK) adopt a coiled-coil conformation. The segment at 42–67 (QKLSKTKNSNNGSNNDNKSSSASGQS) is disordered.

As to quaternary structure, interacts with REV. Interacts with ATBH-8, ATBH-9, ATB-14 and ATB-15. Expressed in the adaxial epidermis of the cotyledons and leaves, and in the vascular cylinder of wild-type torpedo stage embryos. Confined in the central zone and the organizing center in the shoot apical meristem.

The protein localises to the nucleus. Functionally, competitive inhibitor of the HD-ZIPIII transcription factors in shoot apical meristem (SAM) development. Acts by forming non-functional heterodimers. Part of a negative feedback loop. Involved in SAM development and lateral organ patterning. Essential for proper functioning of stem cells in the SAM. The polypeptide is Protein LITTLE ZIPPER 3 (Arabidopsis thaliana (Mouse-ear cress)).